Reading from the N-terminus, the 145-residue chain is AN1-type zinc finger protein 2A (145 aa).

2 AN1-type zinc fingers span residues proline 4–valine 52 and lysine 94–isoleucine 142. The Zn(2+) site is built by cysteine 10, cysteine 15, cysteine 25, cysteine 28, cysteine 33, histidine 36, histidine 42, cysteine 44, cysteine 100, cysteine 105, cysteine 115, cysteine 118, cysteine 123, histidine 126, histidine 132, and cysteine 134.

It is found in the cytoplasm. The protein localises to the nucleus. This is AN1-type zinc finger protein 2A (ZFAND2A) from Homo sapiens (Human).